We begin with the raw amino-acid sequence, 95 residues long: Exodeoxyribonuclease 7 small subunit (95 aa).

The segment covering 62–83 (LTKDESKKTNKTGFRGESKTTE) has biased composition (basic and acidic residues). The tract at residues 62–95 (LTKDESKKTNKTGFRGESKTTETKNNTAQEEDLF) is disordered.

The protein belongs to the XseB family. In terms of assembly, heterooligomer composed of large and small subunits.

The protein resides in the cytoplasm. The catalysed reaction is Exonucleolytic cleavage in either 5'- to 3'- or 3'- to 5'-direction to yield nucleoside 5'-phosphates.. In terms of biological role, bidirectionally degrades single-stranded DNA into large acid-insoluble oligonucleotides, which are then degraded further into small acid-soluble oligonucleotides. This chain is Exodeoxyribonuclease 7 small subunit, found in Leptospira interrogans serogroup Icterohaemorrhagiae serovar copenhageni (strain Fiocruz L1-130).